The primary structure comprises 451 residues: Chromosomal replication initiator protein DnaA (451 aa).

A domain I, interacts with DnaA modulators region spans residues 1–73 (MQDNLPQIWE…SNALKQTTSK (73 aa)). Residues 73 to 113 (KNFEIRFIVPSEEKISKTEESQKKLEGSVNISVASDQFVSN) form a domain II region. The segment at 114–330 (NLNPKYTFDT…GALIRIVAYS (217 aa)) is domain III, AAA+ region. Residues glycine 158, glycine 160, lysine 161, and threonine 162 each coordinate ATP. Residues 331–451 (SLTNSEITVE…ERIAKEIKGD (121 aa)) form a domain IV, binds dsDNA region.

Belongs to the DnaA family. As to quaternary structure, oligomerizes as a right-handed, spiral filament on DNA at oriC.

It is found in the cytoplasm. In terms of biological role, plays an essential role in the initiation and regulation of chromosomal replication. ATP-DnaA binds to the origin of replication (oriC) to initiate formation of the DNA replication initiation complex once per cell cycle. Binds the DnaA box (a 9 base pair repeat at the origin) and separates the double-stranded (ds)DNA. Forms a right-handed helical filament on oriC DNA; dsDNA binds to the exterior of the filament while single-stranded (ss)DNA is stabiized in the filament's interior. The ATP-DnaA-oriC complex binds and stabilizes one strand of the AT-rich DNA unwinding element (DUE), permitting loading of DNA polymerase. After initiation quickly degrades to an ADP-DnaA complex that is not apt for DNA replication. Binds acidic phospholipids. The chain is Chromosomal replication initiator protein DnaA from Alkaliphilus oremlandii (strain OhILAs) (Clostridium oremlandii (strain OhILAs)).